A 286-amino-acid chain; its full sequence is Acyl-CoA-binding domain-containing protein 6 (286 aa).

The tract at residues 1–24 (MASPGVLEESSSGEACSGGCPEQW) is disordered. A compositionally biased stretch (low complexity) spans 8–22 (EESSSGEACSGGCPE). Residues 32–117 (LQGQFEQAAK…VKKLDPDWSP (86 aa)) enclose the ACB domain. An acyl-CoA-binding positions include 59–63 (YARYK), Lys85, and Tyr104. ANK repeat units follow at residues 182–211 (EGRC…HINM) and 215–244 (EGQT…DPSL).

The protein resides in the cytoplasm. Its subcellular location is the nucleus. In terms of biological role, binds long-chain acyl-coenzyme A molecules with a strong preference for unsaturated C18:1-CoA. Does not bind fatty acids. Plays a role in protein N-myristoylation. This Xenopus tropicalis (Western clawed frog) protein is Acyl-CoA-binding domain-containing protein 6 (acbd6).